The chain runs to 612 residues: uncharacterized protein (612 aa).

It is found in the plastid. The protein resides in the chloroplast. This is an uncharacterized protein from Pyropia yezoensis (Susabi-nori).